The primary structure comprises 491 residues: Probable cytosol aminopeptidase (491 aa).

Residues lysine 261 and aspartate 266 each contribute to the Mn(2+) site. The active site involves lysine 273. Residues aspartate 284, aspartate 343, and glutamate 345 each coordinate Mn(2+). The active site involves arginine 347.

Belongs to the peptidase M17 family. Requires Mn(2+) as cofactor.

Its subcellular location is the cytoplasm. It carries out the reaction Release of an N-terminal amino acid, Xaa-|-Yaa-, in which Xaa is preferably Leu, but may be other amino acids including Pro although not Arg or Lys, and Yaa may be Pro. Amino acid amides and methyl esters are also readily hydrolyzed, but rates on arylamides are exceedingly low.. It catalyses the reaction Release of an N-terminal amino acid, preferentially leucine, but not glutamic or aspartic acids.. Presumably involved in the processing and regular turnover of intracellular proteins. Catalyzes the removal of unsubstituted N-terminal amino acids from various peptides. In Geobacter sp. (strain M21), this protein is Probable cytosol aminopeptidase.